We begin with the raw amino-acid sequence, 366 residues long: MKTNLLDFTLPALTEHFAAMGEKPFRAKQVMRWMHQMGQNDFDAMTDLAKSLRAKLHDTATVTVPSLMLEQASSDGTRKWLLDVGTGNRVETVFIPEDDRGTLCVSSQVGCALECTFCSTGRQGFNRNLSTAEIIGQLWWANKSMGVTPKNERVISNVVMMGMGEPLANYDNVVAAMRIMLDDHGYGLSRRRVTLSTSGLVPAMDRLREDCPVALAVSLHAPNDRIRDEIVPINKKYPLRELLAACERYLEKAPRDFVTFEYVMLDQINDRPEHARELVALVRDVPCKFNLIPFNPFPNSGYGRASNNAVRAFRDILAEAGYITTVRKTRGEDIDAACGQLAGQVQDKTQRKVRWLDKGGSTEAGV.

E91 functions as the Proton acceptor in the catalytic mechanism. Residues E97–D333 form the Radical SAM core domain. Cysteines 104 and 338 form a disulfide. [4Fe-4S] cluster-binding residues include C111, C115, and C118. S-adenosyl-L-methionine contacts are provided by residues G164–E165, S196, S218–H220, and N295. Catalysis depends on C338, which acts as the S-methylcysteine intermediate.

Belongs to the radical SAM superfamily. RlmN family. [4Fe-4S] cluster is required as a cofactor.

Its subcellular location is the cytoplasm. It catalyses the reaction adenosine(2503) in 23S rRNA + 2 reduced [2Fe-2S]-[ferredoxin] + 2 S-adenosyl-L-methionine = 2-methyladenosine(2503) in 23S rRNA + 5'-deoxyadenosine + L-methionine + 2 oxidized [2Fe-2S]-[ferredoxin] + S-adenosyl-L-homocysteine. The catalysed reaction is adenosine(37) in tRNA + 2 reduced [2Fe-2S]-[ferredoxin] + 2 S-adenosyl-L-methionine = 2-methyladenosine(37) in tRNA + 5'-deoxyadenosine + L-methionine + 2 oxidized [2Fe-2S]-[ferredoxin] + S-adenosyl-L-homocysteine. In terms of biological role, specifically methylates position 2 of adenine 2503 in 23S rRNA and position 2 of adenine 37 in tRNAs. m2A2503 modification seems to play a crucial role in the proofreading step occurring at the peptidyl transferase center and thus would serve to optimize ribosomal fidelity. This chain is Dual-specificity RNA methyltransferase RlmN, found in Laribacter hongkongensis (strain HLHK9).